The sequence spans 127 residues: Glycine cleavage system H protein (127 aa).

Residues 24–105 (TLTVGVTDHA…AYAAWLFKLK (82 aa)) form the Lipoyl-binding domain. Lys65 carries the post-translational modification N6-lipoyllysine.

Belongs to the GcvH family. The glycine cleavage system is composed of four proteins: P, T, L and H. Requires (R)-lipoate as cofactor.

The glycine cleavage system catalyzes the degradation of glycine. The H protein shuttles the methylamine group of glycine from the P protein to the T protein. This Azoarcus sp. (strain BH72) protein is Glycine cleavage system H protein.